Reading from the N-terminus, the 196-residue chain is Pyridoxal 5'-phosphate synthase subunit PdxT (196 aa).

Position 47–49 (47–49) interacts with L-glutamine; sequence GES. Cysteine 79 serves as the catalytic Nucleophile. L-glutamine-binding positions include arginine 106 and 134 to 135; that span reads IR. Catalysis depends on charge relay system residues histidine 170 and glutamate 172.

Belongs to the glutaminase PdxT/SNO family. As to quaternary structure, in the presence of PdxS, forms a dodecamer of heterodimers. Only shows activity in the heterodimer.

The catalysed reaction is aldehydo-D-ribose 5-phosphate + D-glyceraldehyde 3-phosphate + L-glutamine = pyridoxal 5'-phosphate + L-glutamate + phosphate + 3 H2O + H(+). It catalyses the reaction L-glutamine + H2O = L-glutamate + NH4(+). Its pathway is cofactor biosynthesis; pyridoxal 5'-phosphate biosynthesis. Catalyzes the hydrolysis of glutamine to glutamate and ammonia as part of the biosynthesis of pyridoxal 5'-phosphate. The resulting ammonia molecule is channeled to the active site of PdxS. This is Pyridoxal 5'-phosphate synthase subunit PdxT from Bacillus cereus (strain G9842).